We begin with the raw amino-acid sequence, 178 residues long: CDP-archaeol synthase (178 aa).

The next 5 membrane-spanning stretches (helical) occupy residues 3-23, 56-76, 87-107, 123-145, and 150-169; these read LLLL…ANAV, FFGI…VILY, LFGY…GDML, APIL…FYPL, and IVLL…IIAY.

The protein belongs to the CDP-archaeol synthase family. Mg(2+) serves as cofactor.

The protein localises to the cell membrane. The enzyme catalyses 2,3-bis-O-(geranylgeranyl)-sn-glycerol 1-phosphate + CTP + H(+) = CDP-2,3-bis-O-(geranylgeranyl)-sn-glycerol + diphosphate. It functions in the pathway membrane lipid metabolism; glycerophospholipid metabolism. In terms of biological role, catalyzes the formation of CDP-2,3-bis-(O-geranylgeranyl)-sn-glycerol (CDP-archaeol) from 2,3-bis-(O-geranylgeranyl)-sn-glycerol 1-phosphate (DGGGP) and CTP. This reaction is the third ether-bond-formation step in the biosynthesis of archaeal membrane lipids. The sequence is that of CDP-archaeol synthase from Methanococcus maripaludis (strain C6 / ATCC BAA-1332).